A 111-amino-acid polypeptide reads, in one-letter code: MGNFFSDLFNIKGATNPDSEHHQLRMNCRCGGSATYRCSVKVEHEYLEKFYVDYPFMKQYWHGTLCGSPDEYSFIACEDCIGENQNIFTHYPDGWGENPKFAYHYEKANLI.

G2 carries N-myristoyl glycine; by host lipidation.

This is an uncharacterized protein from Acanthamoeba polyphaga mimivirus (APMV).